Here is a 193-residue protein sequence, read N- to C-terminus: MRANNNNTREEERSSSSKQQQPQAHMSLKIIDSCLRLSVVPLSVATIWLTVTNHESNPDYGNLDYNSIMGLKYMVGVSAISAIYALLSTISLWVTCLVSKAWLFFVPDQVLAYVMTTSVAGATEIVYLLNKGDKIVTWSEMCSSYPHYCSKLTIALGLHVFVLFFFLFLSVISAYRAFSPFDPPCDSQTNIDA.

Residues 1-24 (MRANNNNTREEERSSSSKQQQPQA) are disordered. Residues 1 to 29 (MRANNNNTREEERSSSSKQQQPQAHMSLK) are Cytoplasmic-facing. A helical membrane pass occupies residues 30–50 (IIDSCLRLSVVPLSVATIWLT). Residues 51 to 73 (VTNHESNPDYGNLDYNSIMGLKY) lie on the Extracellular side of the membrane. The helical transmembrane segment at 74-94 (MVGVSAISAIYALLSTISLWV) threads the bilayer. The Cytoplasmic segment spans residues 95-109 (TCLVSKAWLFFVPDQ). A helical transmembrane segment spans residues 110–132 (VLAYVMTTSVAGATEIVYLLNKG). Over 133 to 151 (DKIVTWSEMCSSYPHYCSK) the chain is Extracellular. A helical transmembrane segment spans residues 152-172 (LTIALGLHVFVLFFFLFLSVI). Over 173-193 (SAYRAFSPFDPPCDSQTNIDA) the chain is Cytoplasmic.

It belongs to the Casparian strip membrane proteins (CASP) family. As to quaternary structure, homodimer and heterodimers.

Its subcellular location is the cell membrane. In Arabidopsis lyrata subsp. lyrata (Lyre-leaved rock-cress), this protein is CASP-like protein 2D1.